We begin with the raw amino-acid sequence, 353 residues long: DNA-directed RNA polymerase subunit alpha (353 aa).

The segment at 1–245 (MEKIQKITYK…AHFQIIGNIN (245 aa)) is alpha N-terminal domain (alpha-NTD). The alpha C-terminal domain (alpha-CTD) stretch occupies residues 261–353 (EREIKSTTPI…QLNNSEEGEE (93 aa)).

This sequence belongs to the RNA polymerase alpha chain family. In terms of assembly, homodimer. The RNAP catalytic core consists of 2 alpha, 1 beta, 1 beta' and 1 omega subunit. When a sigma factor is associated with the core the holoenzyme is formed, which can initiate transcription.

It carries out the reaction RNA(n) + a ribonucleoside 5'-triphosphate = RNA(n+1) + diphosphate. Functionally, DNA-dependent RNA polymerase catalyzes the transcription of DNA into RNA using the four ribonucleoside triphosphates as substrates. The chain is DNA-directed RNA polymerase subunit alpha from Mycoplasma sp.